Here is a 365-residue protein sequence, read N- to C-terminus: Class I histocompatibility antigen, B alpha chain (365 aa).

Positions 1 to 24 (MTVMAPRTLLLLLSGALVLTETWA) are cleaved as a signal peptide. Residues 25–114 (GSHSMRYFST…ALGYYNQSEA (90 aa)) form an alpha-1 region. Over 25–308 (GSHSMRYFST…EPPSQPTIPI (284 aa)) the chain is Extracellular. An N-linked (GlcNAc...) asparagine glycan is attached at Asn-110. The interval 115 to 206 (GSHTIQMMSG…ENGKETLQRA (92 aa)) is alpha-2. 2 disulfides stabilise this stretch: Cys-125/Cys-188 and Cys-227/Cys-283. The interval 207–298 (EPPKTHVTHH…GLPEPLTLRW (92 aa)) is alpha-3. Positions 209–297 (PKTHVTHHPV…EGLPEPLTLR (89 aa)) constitute an Ig-like C1-type domain. The tract at residues 299-308 (EPPSQPTIPI) is connecting peptide. A helical membrane pass occupies residues 309–332 (MGIVAILAILGAVVTGAVVTAVMW). Residues 333–365 (RKKSSDKKGGSYSQAARSDSAQGSDVSLTACKV) are Cytoplasmic-facing. The segment at 337 to 361 (SDKKGGSYSQAARSDSAQGSDVSLT) is disordered. A compositionally biased stretch (polar residues) spans 346–359 (QAARSDSAQGSDVS). Phosphoserine is present on residues Ser-356 and Ser-359.

It belongs to the MHC class I family. As to quaternary structure, heterodimer of an alpha chain and a beta chain (beta-2-microglobulin).

The protein localises to the membrane. Involved in the presentation of foreign antigens to the immune system. The sequence is that of Class I histocompatibility antigen, B alpha chain from Saguinus oedipus (Cotton-top tamarin).